Reading from the N-terminus, the 412-residue chain is Protein Mb3436c (412 aa).

The residue at position 227 (Lys-227) is an N6-(pyridoxal phosphate)lysine.

Belongs to the DegT/DnrJ/EryC1 family.

The protein is Protein Mb3436c of Mycobacterium bovis (strain ATCC BAA-935 / AF2122/97).